A 419-amino-acid chain; its full sequence is Glutamyl-tRNA reductase (419 aa).

Substrate-binding positions include 50–53, Ser108, 113–115, and Gln119; these read TCNR and ETQ. The active-site Nucleophile is the Cys51. 188–193 provides a ligand contact to NADP(+); it reads GAGEMI.

It belongs to the glutamyl-tRNA reductase family. Homodimer.

The catalysed reaction is (S)-4-amino-5-oxopentanoate + tRNA(Glu) + NADP(+) = L-glutamyl-tRNA(Glu) + NADPH + H(+). Its pathway is porphyrin-containing compound metabolism; protoporphyrin-IX biosynthesis; 5-aminolevulinate from L-glutamyl-tRNA(Glu): step 1/2. In terms of biological role, catalyzes the NADPH-dependent reduction of glutamyl-tRNA(Glu) to glutamate 1-semialdehyde (GSA). The sequence is that of Glutamyl-tRNA reductase from Albidiferax ferrireducens (strain ATCC BAA-621 / DSM 15236 / T118) (Rhodoferax ferrireducens).